The chain runs to 447 residues: Probable glycosyltransferase 7 (447 aa).

Residues 1–31 form a disordered region; it reads MRATTGARHLHPPWRRGLRHHRQSTMPPRAS. Residues 1-37 lie on the Cytoplasmic side of the membrane; sequence MRATTGARHLHPPWRRGLRHHRQSTMPPRASRGRLAD. Positions 8–23 are enriched in basic residues; the sequence is RHLHPPWRRGLRHHRQ. A helical; Signal-anchor for type II membrane protein membrane pass occupies residues 38–60; that stretch reads AALFTAGAVLGSVLLLTLASPFS. Residues 61 to 447 are Lumenal-facing; sequence SSSSPSSGVG…LPFDHPTQTA (387 aa). N-linked (GlcNAc...) asparagine glycosylation is found at asparagine 285 and asparagine 329.

This sequence belongs to the glycosyltransferase 34 family.

The protein localises to the golgi apparatus membrane. Its function is as follows. Probable glycosyltransferase that may be involved in the biosynthesis of xyloglucan. This Oryza sativa subsp. indica (Rice) protein is Probable glycosyltransferase 7.